The following is a 166-amino-acid chain: Small ribosomal subunit protein uS5 (166 aa).

In terms of domain architecture, S5 DRBM spans 11 to 74 (LVEKLVAVDR…EAARRNMITV (64 aa)).

The protein belongs to the universal ribosomal protein uS5 family. As to quaternary structure, part of the 30S ribosomal subunit. Contacts proteins S4 and S8.

In terms of biological role, with S4 and S12 plays an important role in translational accuracy. Its function is as follows. Located at the back of the 30S subunit body where it stabilizes the conformation of the head with respect to the body. The polypeptide is Small ribosomal subunit protein uS5 (Acinetobacter baumannii (strain ATCC 17978 / DSM 105126 / CIP 53.77 / LMG 1025 / NCDC KC755 / 5377)).